A 263-amino-acid chain; its full sequence is Acetyl-coenzyme A carboxylase carboxyl transferase subunit beta (263 aa).

Residues M1–A263 enclose the CoA carboxyltransferase N-terminal domain. Zn(2+)-binding residues include C3, C6, C22, and C25. The segment at C3–C25 adopts a C4-type zinc-finger fold.

The protein belongs to the AccD/PCCB family. In terms of assembly, acetyl-CoA carboxylase is a heterohexamer composed of biotin carboxyl carrier protein (AccB), biotin carboxylase (AccC) and two subunits each of ACCase subunit alpha (AccA) and ACCase subunit beta (AccD). The cofactor is Zn(2+).

The protein resides in the cytoplasm. The enzyme catalyses N(6)-carboxybiotinyl-L-lysyl-[protein] + acetyl-CoA = N(6)-biotinyl-L-lysyl-[protein] + malonyl-CoA. Its pathway is lipid metabolism; malonyl-CoA biosynthesis; malonyl-CoA from acetyl-CoA: step 1/1. Functionally, component of the acetyl coenzyme A carboxylase (ACC) complex. Biotin carboxylase (BC) catalyzes the carboxylation of biotin on its carrier protein (BCCP) and then the CO(2) group is transferred by the transcarboxylase to acetyl-CoA to form malonyl-CoA. This Treponema denticola (strain ATCC 35405 / DSM 14222 / CIP 103919 / JCM 8153 / KCTC 15104) protein is Acetyl-coenzyme A carboxylase carboxyl transferase subunit beta.